The following is a 236-amino-acid chain: Lectin CPL (236 aa).

Mn(2+) contacts are provided by glutamate 8 and aspartate 10. Positions 10, 12, 14, and 19 each coordinate Ca(2+). Asparagine 14 contacts a carbohydrate. Mn(2+) is bound by residues aspartate 19 and histidine 24. Residues 99-100, aspartate 207, and arginine 227 contribute to the a carbohydrate site; that span reads VY.

It belongs to the leguminous lectin family. Homotetramer; dimer of dimers. Post-translationally, concanavalin A-like lectins of the Diocleinae subtribe undergo proteolytic processing referred to as circular permutation. The propeptide is split into an N-terminal and a C-terminal part, the gamma and beta chain, respectively. These are then religated in beta-gamma order to form the mature alpha chain. The beta and gamma chains can often be detected in cell extracts. Residues 1-118 of the mature chain, as displayed here, probably constitute the beta chain in the propeptide, residues 119-236 the gamma chain.

Its function is as follows. D-mannose/D-glucose-binding lectin that also binds derivative alpha-methyl-D-mannppyranoside. Has hemagglutinating activity towards rabbit erythrocytes. The polypeptide is Lectin CPL (Bionia pedicellata (Camptosema pedicellatum)).